The chain runs to 131 residues: Aspartate 1-decarboxylase (131 aa).

Ser25 acts as the Schiff-base intermediate with substrate; via pyruvic acid in catalysis. Ser25 is subject to Pyruvic acid (Ser). Position 57 (Thr57) interacts with substrate. The Proton donor role is filled by Tyr58. 73–75 contacts substrate; the sequence is GAA.

The protein belongs to the PanD family. As to quaternary structure, heterooctamer of four alpha and four beta subunits. Pyruvate serves as cofactor. In terms of processing, is synthesized initially as an inactive proenzyme, which is activated by self-cleavage at a specific serine bond to produce a beta-subunit with a hydroxyl group at its C-terminus and an alpha-subunit with a pyruvoyl group at its N-terminus.

The protein resides in the cytoplasm. The catalysed reaction is L-aspartate + H(+) = beta-alanine + CO2. Its pathway is cofactor biosynthesis; (R)-pantothenate biosynthesis; beta-alanine from L-aspartate: step 1/1. In terms of biological role, catalyzes the pyruvoyl-dependent decarboxylation of aspartate to produce beta-alanine. The protein is Aspartate 1-decarboxylase of Anaeromyxobacter sp. (strain K).